Consider the following 396-residue polypeptide: Cathepsin E (396 aa).

A signal peptide spans Met1–Gly19. A propeptide spans Ser20–Met53 (activation peptide). In terms of domain architecture, Peptidase A1 spans Tyr78–Pro396. N-linked (GlcNAc...) asparagine glycosylation occurs at Asn90. Asp96 is an active-site residue. 2 disulfide bridges follow: Cys109–Cys114 and Cys272–Cys276. Asp281 is an active-site residue. A disulfide bridge connects residues Cys314 and Cys351.

Belongs to the peptidase A1 family. Homodimer; disulfide-linked. Glycosylated. The nature of the carbohydrate chain varies between cell types. In fibroblasts, the proenzyme contains a high mannose-type oligosaccharide, while the mature enzyme contains a complex-type oligosaccharide. In erythrocyte membranes, both the proenzyme and mature enzyme contain a complex-type oligosaccharide. Post-translationally, two forms are produced by autocatalytic cleavage, form I begins at Ile-54, form II begins at Thr-57. In terms of tissue distribution, expressed abundantly in the stomach, the Clara cells of the lung and activated B-lymphocytes, and at lower levels in lymph nodes, skin and spleen. Not expressed in resting B-lymphocytes.

It is found in the endosome. The enzyme catalyses Similar to cathepsin D, but slightly broader specificity.. May have a role in immune function. Probably involved in the processing of antigenic peptides during MHC class II-mediated antigen presentation. May play a role in activation-induced lymphocyte depletion in the thymus, and in neuronal degeneration and glial cell activation in the brain. The protein is Cathepsin E (CTSE) of Homo sapiens (Human).